The chain runs to 579 residues: Isocitrate dehydrogenase kinase/phosphatase (579 aa).

ATP is bound by residues 324-330 (ADGTPGM) and lysine 345. Aspartate 380 is an active-site residue.

This sequence belongs to the AceK family.

Its subcellular location is the cytoplasm. It catalyses the reaction L-seryl-[isocitrate dehydrogenase] + ATP = O-phospho-L-seryl-[isocitrate dehydrogenase] + ADP + H(+). In terms of biological role, bifunctional enzyme which can phosphorylate or dephosphorylate isocitrate dehydrogenase (IDH) on a specific serine residue. This is a regulatory mechanism which enables bacteria to bypass the Krebs cycle via the glyoxylate shunt in response to the source of carbon. When bacteria are grown on glucose, IDH is fully active and unphosphorylated, but when grown on acetate or ethanol, the activity of IDH declines drastically concomitant with its phosphorylation. This chain is Isocitrate dehydrogenase kinase/phosphatase, found in Xanthomonas axonopodis pv. citri (strain 306).